The following is a 168-amino-acid chain: 3'-5' exoribonuclease MT2234.1 (168 aa).

Asp-6 is a Mg(2+) binding site. Residues 6–9 (DTEF) form an RNA binding region.

Homodimer. Mg(2+) is required as a cofactor.

Functionally, exonuclease that cleaves single-stranded 3' overhangs of double-stranded RNA. The sequence is that of 3'-5' exoribonuclease MT2234.1 from Mycobacterium tuberculosis (strain CDC 1551 / Oshkosh).